The sequence spans 270 residues: MLRQLLLAALCLAGPPAPARACQLPSEWRPLSEGCRAELAETIVYARVLALHPEAPGLYNHLPWQYHAGQGGLFYSAEVEMLCDQAWGSMLEVPAGSRLNLTGLGYFSCHSHTVVQDYSYFFFLRMDENYNLLPHGVNFQDAIFPDTQENRRMFSSLFQFSNCSQGQQLATFSSDWEIQEDSRLMCSSVQKALFEEEDHVKKLQQKVATLEKRNRQLRERVKKVKRSLRQARKKGRHLELANQKLSEKLAAGALPHINARGPVRPPYLRG.

An N-terminal signal peptide occupies residues 1–21 (MLRQLLLAALCLAGPPAPARA). Residue Asn-100 is glycosylated (N-linked (GlcNAc...) asparagine). Residues 188–251 (SVQKALFEEE…NQKLSEKLAA (64 aa)) are a coiled coil.

As to quaternary structure, homodimer. In terms of tissue distribution, expressed in umbilical vein endothelial cells (HUVEC), and at lower levels in aortic smooth muscle cells (HASMC).

The protein localises to the secreted. Functionally, negatively regulates TNF-alpha-induced pro-inflammatory response in endothelial cells (ECs) via inhibition of TNF-alpha-induced NF-kappaB activation in ECs. Positively regulates lipid accumulation in adipose cells. This Homo sapiens (Human) protein is Coiled-coil domain-containing protein 3 (CCDC3).